A 181-amino-acid polypeptide reads, in one-letter code: Oligoribonuclease (181 aa).

Positions 8 to 171 constitute an Exonuclease domain; it reads LIWLDLEMTG…DDIKESIAEL (164 aa). Tyr129 is a catalytic residue.

The protein belongs to the oligoribonuclease family.

The protein resides in the cytoplasm. In terms of biological role, 3'-to-5' exoribonuclease specific for small oligoribonucleotides. This Colwellia psychrerythraea (strain 34H / ATCC BAA-681) (Vibrio psychroerythus) protein is Oligoribonuclease.